Reading from the N-terminus, the 231-residue chain is 2-C-methyl-D-erythritol 4-phosphate cytidylyltransferase (231 aa).

Belongs to the IspD/TarI cytidylyltransferase family. IspD subfamily.

It carries out the reaction 2-C-methyl-D-erythritol 4-phosphate + CTP + H(+) = 4-CDP-2-C-methyl-D-erythritol + diphosphate. It participates in isoprenoid biosynthesis; isopentenyl diphosphate biosynthesis via DXP pathway; isopentenyl diphosphate from 1-deoxy-D-xylulose 5-phosphate: step 2/6. Its function is as follows. Catalyzes the formation of 4-diphosphocytidyl-2-C-methyl-D-erythritol from CTP and 2-C-methyl-D-erythritol 4-phosphate (MEP). This chain is 2-C-methyl-D-erythritol 4-phosphate cytidylyltransferase, found in Rubrobacter xylanophilus (strain DSM 9941 / JCM 11954 / NBRC 16129 / PRD-1).